The chain runs to 620 residues: Cilia- and flagella-associated protein 52 (620 aa).

11 WD repeats span residues 62 to 106 (GHGN…LLAR), 109 to 150 (LHKG…AICG), 156 to 195 (LNVGNATNVIFSRCRDEMFMTAGNGTIRVWELDLPNRKIW), 288 to 327 (QLQGGITSITLRGEGHQFLVGTEESHIYRVSFTDFKETLI), 330 to 369 (CHFDAVEDIVFPFGTAELFATCAKKDIRVWHTSSNRELLR), 372 to 411 (VPNMTCHGIDFMRDGKSIISAWNDGKIRAFAPETGRLMYV), 415 to 454 (AHRIGVTAIATTSDCKRVISGGGEGEVRVWQIGCQTQKLE), 459 to 498 (EHKSSVSCIRVKRNNEECVTASTDGTCIIWDLVRLRRNQM), 500 to 539 (LANTLFQCVCYHPEEFQIITSGTDRKIAYWEVFDGTVIRE), 543 to 582 (SLSGSINGMDITQEGVHFVTGGNDHLVKVWDYNEGEVTHV), and 585 to 620 (GHSGNITRIRISPGNQYIVSVSADGAILRWKYPYTS).

The protein belongs to the CFAP52 family. Microtubule inner protein component of sperm flagellar doublet microtubules. Interacts with BRCA2. Interacts with the CCT chaperonin complex. Interacts with HSP70. Interacts with AK8. Interacts with CFAP45. Interacts with DNAI1. Interacts with IQDC. In terms of tissue distribution, expressed in respiratory cells and sperm (at protein level). Highly expressed in testis. Up-regulated in hepatocellular carcinoma (HCC).

Its subcellular location is the cytoplasm. It is found in the cytoskeleton. The protein localises to the cilium axoneme. The protein resides in the flagellum axoneme. Its function is as follows. Microtubule inner protein (MIP) part of the dynein-decorated doublet microtubules (DMTs) in cilia axoneme. Important for proper ciliary and flagellar beating. May act in cooperation with CFAP45 and axonemal dynein subunit DNAH11. May play a role in cell growth and/or survival. The polypeptide is Cilia- and flagella-associated protein 52 (Homo sapiens (Human)).